The primary structure comprises 458 residues: MATNKERLFAPGALGPGSGYPGAGFPFAFPGALRGSPPFEMLSPSFRGLGQPDLPKEMASLSVETQSTSSEEMVPSSPSPPPPPRVYKPCFVCNDKSSGYHYGVSSCEGCKGFFRRSIQKNMVYTCHRDKNCIINKVTRNRCQYCRLQKCFEVGMSKEAVRNDRNKKKKEVKEEGSPDSYELSPQLEELITKVSKAHQETFPSLCQLGKYTTNSSADHRVQLDLGLWDKFSELATKCIIKIVEFAKRLPGFTGLSIADQITLLKAACLDILMLRICTRYTPEQDTMTFSDGLTLNRTQMHNAGFGPLTDLVFAFAGQLLPLEMDDTETGLLSAICLICGDRMDLEEPEKVDKLQEPLLEALRLYARRRRPSQPYMFPRMLMKITDLRGISTKGAERAITLKMEIPGPMPPLIREMLENPEMFEDDSSKPGPHPKASSEDEAPGGQGKRGQSPQPDQGP.

The tract at residues 1–89 is modulating; the sequence is MATNKERLFA…PPPPPRVYKP (89 aa). The residue at position 34 (R34) is an Omega-N-methylarginine. Residues 58–83 are disordered; the sequence is MASLSVETQSTSSEEMVPSSPSPPPP. Polar residues predominate over residues 62–71; that stretch reads SVETQSTSSE. 2 NR C4-type zinc fingers span residues 90–110 and 126–150; these read CFVCNDKSSGYHYGVSSCEGC and CHRDKNCIINKVTRNRCQYCRLQKC. The segment at residues 90–155 is a DNA-binding region (nuclear receptor); it reads CFVCNDKSSG…RLQKCFEVGM (66 aa). The hinge stretch occupies residues 156–184; sequence SKEAVRNDRNKKKKEVKEEGSPDSYELSP. The segment at 161–180 is disordered; sequence RNDRNKKKKEVKEEGSPDSY. Glycyl lysine isopeptide (Lys-Gly) (interchain with G-Cter in SUMO2) cross-links involve residues K172 and K401. The NR LBD domain occupies 185 to 419; sequence QLEELITKVS…PLIREMLENP (235 aa). A disordered region spans residues 409–458; sequence PPLIREMLENPEMFEDDSSKPGPHPKASSEDEAPGGQGKRGQSPQPDQGP. Residues 448–458 are compositionally biased toward polar residues; it reads RGQSPQPDQGP.

The protein belongs to the nuclear hormone receptor family. NR1 subfamily. In terms of assembly, homodimer. Heterodimer with a RXR molecule. Binds DNA preferentially as a RAR/RXR heterodimer. Forms a complex with PUS1 and the SRA1 RNA in the nucleus.

The protein resides in the nucleus. The protein localises to the cytoplasm. Functionally, receptor for retinoic acid. Retinoic acid receptors bind as heterodimers to their target response elements in response to their ligands, all-trans or 9-cis retinoic acid, and regulate gene expression in various biological processes. The RAR/RXR heterodimers bind to the retinoic acid response elements (RARE) composed of tandem 5'-AGGTCA-3' sites known as DR1-DR5. In the absence of ligand, acts mainly as an activator of gene expression due to weak binding to corepressors. Required for limb bud development. In concert with RARA or RARB, required for skeletal growth, matrix homeostasis and growth plate function. The polypeptide is Retinoic acid receptor gamma (Rarg) (Mus musculus (Mouse)).